We begin with the raw amino-acid sequence, 223 residues long: Probable glutathione S-transferase (223 aa).

The 80-residue stretch at 2 to 81 (AEVKLLGFWY…YIDETFEGPS (80 aa)) folds into the GST N-terminal domain. Glutathione contacts are provided by residues S12, K39, V53, and 65–66 (ES). The GST C-terminal domain occupies 86-212 (DPYDRALARF…ELLAFFRARF (127 aa)).

It belongs to the GST superfamily. HSP26 family. Root tip-specific expression.

It carries out the reaction RX + glutathione = an S-substituted glutathione + a halide anion + H(+). In Nicotiana tabacum (Common tobacco), this protein is Probable glutathione S-transferase.